Consider the following 470-residue polypeptide: Carboxypeptidase Q (470 aa).

The N-terminal stretch at 1-18 is a signal peptide; the sequence is MRSLFFLFIVHLLALGSG. Residues 19–42 constitute a propeptide that is removed on maturation; it reads KAVFKNGVSQRTFREIKEEIANYE. Asparagine 59 is a glycosylation site (N-linked (GlcNAc...) asparagine). Zn(2+) is bound by residues histidine 288 and aspartate 300. The active-site Nucleophile is glutamate 334. Residue glutamate 335 coordinates Zn(2+). Asparagine 351 is a glycosylation site (N-linked (GlcNAc...) asparagine). Aspartate 362 is a binding site for Zn(2+). N-linked (GlcNAc...) asparagine glycosylation is present at asparagine 394. Histidine 432 contacts Zn(2+).

This sequence belongs to the peptidase M28 family. Homodimer. The monomeric form is inactive while the homodimer is active. Post-translationally, N-glycosylated. The secreted form is modified by hybrid or complex type oligosaccharide chains.

It is found in the endoplasmic reticulum. Its subcellular location is the golgi apparatus. It localises to the lysosome. The protein localises to the secreted. Its function is as follows. Carboxypeptidase that may play an important role in the hydrolysis of circulating peptides. Catalyzes the hydrolysis of dipeptides with unsubstituted terminals into amino acids. May play a role in the liberation of thyroxine hormone from its thyroglobulin (Tg) precursor. The sequence is that of Carboxypeptidase Q (Cpq) from Mus musculus (Mouse).